An 818-amino-acid chain; its full sequence is Hillarin (818 aa).

The 68-residue stretch at 9–76 (STCLRCSETV…SSHVPKSGPG (68 aa)) folds into the LIM zinc-binding domain. The tract at residues 97 to 141 (FVNEQIRGTRSEVDGGPLGGSRQSTPNGYGSREISSPSQNDSDYK) is disordered. Positions 117 to 137 (SRQSTPNGYGSREISSPSQND) are enriched in polar residues. Residues 216 to 272 (QDEWERELQRLTHKFEKELATSRRSRDEANILTMRHEQQKEDLEKNMTLRRSKKKES) adopt a coiled-coil conformation.

Belongs to the transglutaminase-like superfamily. Interacts with pnut. In terms of tissue distribution, localizes to the neuropil of the embryonic central nervous system (at protein level). Also detected in third instar larval brain (at protein level).

The protein resides in the cytoplasm. The protein localises to the cell cortex. Its subcellular location is the cleavage furrow. Functionally, may act as a modulator of septin function during cytokinesis in the developing nervous system. This Drosophila melanogaster (Fruit fly) protein is Hillarin.